Consider the following 701-residue polypeptide: Kinesin-like protein KIN-10C (701 aa).

The Kinesin motor domain occupies 8 to 318; it reads VVRVVARVKP…LNLASRICLG (311 aa). Residue 94-101 participates in ATP binding; the sequence is GARNSGKT.

Belongs to the TRAFAC class myosin-kinesin ATPase superfamily. Kinesin family. KIN-10 subfamily.

This Arabidopsis thaliana (Mouse-ear cress) protein is Kinesin-like protein KIN-10C.